The sequence spans 342 residues: Probable RNA methyltransferase PST_2231 (342 aa).

Glutamate 91 acts as the Proton acceptor in catalysis. Positions leucine 94–aspartate 320 constitute a Radical SAM core domain. Cysteine 101 and cysteine 325 are disulfide-bonded. Cysteine 108, cysteine 112, and cysteine 115 together coordinate [4Fe-4S] cluster. S-adenosyl-L-methionine-binding positions include glycine 153 to glutamate 154, serine 183, serine 206 to histidine 208, and asparagine 282. Cysteine 325 (S-methylcysteine intermediate) is an active-site residue.

Belongs to the radical SAM superfamily. RlmN family. The cofactor is [4Fe-4S] cluster.

The protein localises to the cytoplasm. In Stutzerimonas stutzeri (strain A1501) (Pseudomonas stutzeri), this protein is Probable RNA methyltransferase PST_2231.